The chain runs to 262 residues: Polyamine aminopropyltransferase (262 aa).

In terms of domain architecture, PABS spans Met1–Pro249. S-methyl-5'-thioadenosine is bound at residue Asn29. A spermidine-binding site is contributed by Asp83. Catalysis depends on Asp155, which acts as the Proton acceptor.

In terms of assembly, homodimer.

The protein localises to the cytoplasm. It catalyses the reaction S-adenosyl 3-(methylsulfanyl)propylamine + putrescine = S-methyl-5'-thioadenosine + spermidine + H(+). It participates in amine and polyamine biosynthesis; spermidine biosynthesis; spermidine from putrescine: step 1/1. With respect to regulation, inhibited by methylglyoxal bis(cyclopentylamidinohydrazone)(MGBCP). Involved in the cell growth and proliferation. Catalyzes the irreversible transfer of a propylamine group from the amino donor S-adenosylmethioninamine (decarboxy-AdoMet) to putrescine (1,4-diaminobutane) to yield spermidine. Spermidine cannot be used as an aminopropyl acceptor. The chain is Polyamine aminopropyltransferase from Helicobacter pylori (strain ATCC 700392 / 26695) (Campylobacter pylori).